Here is an 82-residue protein sequence, read N- to C-terminus: Small ribosomal subunit protein bS16 (82 aa).

This sequence belongs to the bacterial ribosomal protein bS16 family.

This Cyanothece sp. (strain PCC 7425 / ATCC 29141) protein is Small ribosomal subunit protein bS16.